We begin with the raw amino-acid sequence, 251 residues long: Zinc import ATP-binding protein ZnuC (251 aa).

The ABC transporter domain maps to 5-220 (VSLENVSVSF…PEFISMFGPR (216 aa)). 37–44 (GPNGAGKS) lines the ATP pocket.

This sequence belongs to the ABC transporter superfamily. Zinc importer (TC 3.A.1.15.5) family. As to quaternary structure, the complex is composed of two ATP-binding proteins (ZnuC), two transmembrane proteins (ZnuB) and a solute-binding protein (ZnuA).

The protein resides in the cell inner membrane. It carries out the reaction Zn(2+)(out) + ATP(in) + H2O(in) = Zn(2+)(in) + ADP(in) + phosphate(in) + H(+)(in). Part of the ABC transporter complex ZnuABC involved in zinc import. Responsible for energy coupling to the transport system. In Shigella dysenteriae serotype 1 (strain Sd197), this protein is Zinc import ATP-binding protein ZnuC.